The following is a 166-amino-acid chain: SPbeta prophage-derived uncharacterized protein YomO (166 aa).

In Bacillus subtilis (strain 168), this protein is SPbeta prophage-derived uncharacterized protein YomO (yomO).